Here is an 889-residue protein sequence, read N- to C-terminus: Alanine--tRNA ligase (889 aa).

Residues His566, His570, Cys683, and His687 each coordinate Zn(2+).

The protein belongs to the class-II aminoacyl-tRNA synthetase family. Zn(2+) is required as a cofactor.

Its subcellular location is the cytoplasm. The catalysed reaction is tRNA(Ala) + L-alanine + ATP = L-alanyl-tRNA(Ala) + AMP + diphosphate. In terms of biological role, catalyzes the attachment of alanine to tRNA(Ala) in a two-step reaction: alanine is first activated by ATP to form Ala-AMP and then transferred to the acceptor end of tRNA(Ala). Also edits incorrectly charged Ser-tRNA(Ala) and Gly-tRNA(Ala) via its editing domain. The chain is Alanine--tRNA ligase from Herpetosiphon aurantiacus (strain ATCC 23779 / DSM 785 / 114-95).